Consider the following 1018-residue polypeptide: UPF0182 protein Francci3_3781 (1018 aa).

The next 7 helical transmembrane spans lie at 13-33 (TKVL…IAIF), 60-80 (ILLF…NIVL), 109-129 (MLLI…LSAA), 167-187 (FLLG…LLTH), 208-228 (AHIS…YYLD), 250-270 (AVLP…VLFI), and 283-303 (LGAG…PAIV). Composition is skewed to low complexity over residues 886-896 (TTDAGQDGTPA) and 960-980 (SSPA…SVPA). Disordered stretches follow at residues 886–920 (TTDA…AVGD) and 960–1018 (SSPA…PAPG). A compositionally biased stretch (pro residues) spans 981–995 (SPVPASPAAKPPAPS).

It belongs to the UPF0182 family.

It is found in the cell membrane. This Frankia casuarinae (strain DSM 45818 / CECT 9043 / HFP020203 / CcI3) protein is UPF0182 protein Francci3_3781.